A 363-amino-acid polypeptide reads, in one-letter code: Dual-specificity RNA methyltransferase RlmN (363 aa).

Glu-102 acts as the Proton acceptor in catalysis. The 237-residue stretch at 108–344 (EKKRSTLCVS…TTTIRKNRGE (237 aa)) folds into the Radical SAM core domain. Cys-115 and Cys-350 are disulfide-bonded. [4Fe-4S] cluster-binding residues include Cys-122, Cys-126, and Cys-129. S-adenosyl-L-methionine contacts are provided by residues 174-175 (GE), Ser-206, 228-230 (SLH), and Asn-307. The active-site S-methylcysteine intermediate is Cys-350.

The protein belongs to the radical SAM superfamily. RlmN family. It depends on [4Fe-4S] cluster as a cofactor.

The protein localises to the cytoplasm. The enzyme catalyses adenosine(2503) in 23S rRNA + 2 reduced [2Fe-2S]-[ferredoxin] + 2 S-adenosyl-L-methionine = 2-methyladenosine(2503) in 23S rRNA + 5'-deoxyadenosine + L-methionine + 2 oxidized [2Fe-2S]-[ferredoxin] + S-adenosyl-L-homocysteine. It carries out the reaction adenosine(37) in tRNA + 2 reduced [2Fe-2S]-[ferredoxin] + 2 S-adenosyl-L-methionine = 2-methyladenosine(37) in tRNA + 5'-deoxyadenosine + L-methionine + 2 oxidized [2Fe-2S]-[ferredoxin] + S-adenosyl-L-homocysteine. In terms of biological role, specifically methylates position 2 of adenine 2503 in 23S rRNA and position 2 of adenine 37 in tRNAs. m2A2503 modification seems to play a crucial role in the proofreading step occurring at the peptidyl transferase center and thus would serve to optimize ribosomal fidelity. In Buchnera aphidicola subsp. Acyrthosiphon pisum (strain APS) (Acyrthosiphon pisum symbiotic bacterium), this protein is Dual-specificity RNA methyltransferase RlmN.